Here is a 253-residue protein sequence, read N- to C-terminus: NAC transcription factor 32 (253 aa).

The NAC domain occupies Phe-10 to Lys-160. The DNA-binding element occupies Val-106–Lys-166.

Expressed in germinating seeds, roots, leaf veins, open flowers and silique stalks.

Its subcellular location is the nucleus. Its function is as follows. Transcriptional activator that positively regulates age-dependent senescence, dark-induced leaf senescence and stress-induced senescence. Regulates leaf senescence through the modulation of the expression of senescence-associated genes SGR1/NYE1, SAG113 and SAUR36/SAG201, which are involved in chlorophyll degradation, and abscisic acid (ABA) and auxin promotion of senescence, respectively. Promotes reactive oxygen species (ROS) production during age-dependent and stress-induced senescence. Positively regulates auxin-mediated responses in roots. Stress-responsive NAC transcription factor involved in ABA-inducible leaf senescence signaling. Required for normal seed development and morphology. This is NAC transcription factor 32 from Arabidopsis thaliana (Mouse-ear cress).